The primary structure comprises 1397 residues: Transcriptional activator cubitus interruptus (1397 aa).

Residues 1-440 form an interaction with RDX region; it reads MDAYALPTYF…YDCANADTTD (440 aa). 2 disordered regions span residues 193-212 and 361-383; these read GNRRLGSPRPPGGSIRASIS and GPFKDVVPEQPSSTSGGVAQVEA. 5 consecutive C2H2-type zinc fingers follow at residues 451-476, 484-511, 517-541, 547-572, and 578-603; these read TNCHWRSCRIEFITQDELVKHINNDH, FVCRWEDCTRGEKPFKAQYMLVVHMRRH, HKCTFEGCFKAYSRLENLKTHLRSH, YTCEYPGCSKAFSNASDRAKHQNRTH, and YICKAPGCTKRYTDPSSLRKHVKTVH. 2 disordered regions span residues 636 to 669 and 807 to 877; these read EHNIDSSPCSEDSHLGKMLGTSSPSIKSESDISS and DPLQ…NSTA. Over residues 657-669 the composition is skewed to low complexity; that stretch reads SSPSIKSESDISS. Composition is skewed to polar residues over residues 807-832 and 839-848; these read DPLQNQTSFRNTVSNKQGTVSGSIQG and QNSTASTYYG. Residues 849 to 863 are compositionally biased toward low complexity; that stretch reads SMQSRRSSQSSQVSS. The tract at residues 1161–1397 is interaction with RDX; the sequence is MTAVGGSFSQ…EENRYLQMMQ (237 aa).

This sequence belongs to the GLI C2H2-type zinc-finger protein family. As to quaternary structure, interacts with RDX. Interacts with cos. Interacts with slmb; the interaction is enhanced by phosphorylation by CkIalpha and dco. In terms of processing, polyubiquitinated by RDX in the presence of CUL3, which results in proteasomal degradation. Post-translationally, phosphorylated on multiple sites by protein kinase A (PKA) and phosphorylation by PKA primes further phosphorylation by CK1 and GSK3. Phosphorylation is essential for its proteolytic processing. cos recruits multiple kinases to promote efficient phosphorylation of ci while Hh signaling inhibits phosphorylation by restricting the accessibility of ci to the kinases. Phosphorylation by CkIalpha and dco enhances binding to Slmb, the F-box recognition component of the SCF(slmb) E3 ubiquitin-protein ligase required for ci processing. Transcriptional repressor ciR, a C-terminally truncated form, is generated from the full-length ci (ciFL/ci-155) through proteolytic processing. Hh suppresses the formation of ci75 and promotes the conversion of ci155 into a transcriptional activator (ci155A).

Its subcellular location is the nucleus. Its function is as follows. Has a dual function as a transcriptional activator and a repressor of the hedgehog (Hh) pathway. The full-length ci form (ciFL), acts as an activator (ciA) while ciR, its C-terminally truncated form, acts as a repressor. Involved in segment polarity. Required for the normal development of the posterior half of each embryonic segment. Engrailed protein directly represses ci expression in posterior compartment cells. Essential component of a hh-signaling pathway which regulates the Duox-dependent gut immune response to bacterial uracil; required to activate Cad99C-dependent endosome formation, norpA-dependent Ca2+ mobilization and p38 MAPK, which are essential steps in the Duox-dependent production of reactive oxygen species (ROS) in response to intestinal bacterial infection. The protein is Transcriptional activator cubitus interruptus (ci) of Drosophila melanogaster (Fruit fly).